The following is a 161-amino-acid chain: Transcription elongation factor GreA (161 aa).

The protein belongs to the GreA/GreB family.

In terms of biological role, necessary for efficient RNA polymerase transcription elongation past template-encoded arresting sites. The arresting sites in DNA have the property of trapping a certain fraction of elongating RNA polymerases that pass through, resulting in locked ternary complexes. Cleavage of the nascent transcript by cleavage factors such as GreA or GreB allows the resumption of elongation from the new 3'terminus. GreA releases sequences of 2 to 3 nucleotides. This is Transcription elongation factor GreA from Desulfotalea psychrophila (strain LSv54 / DSM 12343).